A 103-amino-acid chain; its full sequence is Signal recognition particle 19 kDa protein (103 aa).

The protein belongs to the SRP19 family. Part of the signal recognition particle protein translocation system, which is composed of SRP and FtsY. Archaeal SRP consists of a 7S RNA molecule of 300 nucleotides and two protein subunits: SRP54 and SRP19.

It localises to the cytoplasm. Involved in targeting and insertion of nascent membrane proteins into the cytoplasmic membrane. Binds directly to 7S RNA and mediates binding of the 54 kDa subunit of the SRP. The sequence is that of Signal recognition particle 19 kDa protein from Methanopyrus kandleri (strain AV19 / DSM 6324 / JCM 9639 / NBRC 100938).